A 162-amino-acid chain; its full sequence is CASP-like protein BLE3 (162 aa).

Residues 1-7 (MAKVHRL) lie on the Cytoplasmic side of the membrane. A helical transmembrane segment spans residues 8-28 (MNAVLRLAAAAAAATAAVVMV). The Extracellular segment spans residues 29-50 (TSRETTSFFGIQMEAKYSYTPS). The helical transmembrane segment at 51–71 (FIFFVVAYAVAAAYSLLVLAV) threads the bilayer. Over 72-85 (PAGSALSRLALTTD) the chain is Cytoplasmic. Residues 86–106 (VVLGMVLAGAVASAGAISDIA) form a helical membrane-spanning segment. At 107–128 (KNGNSHAGWLPVCGQIHAYCNH) the chain is on the extracellular side. Residues 129-149 (VMAALIAGFVALAVHFVVVMY) form a helical membrane-spanning segment. At 150–162 (SLHIVTDVICPCH) the chain is on the cytoplasmic side.

The protein belongs to the Casparian strip membrane proteins (CASP) family. As to quaternary structure, homodimer and heterodimers.

The protein resides in the cell membrane. Involved in cell elongation in rice through dual regulation by brassinolide and auxin. In Oryza sativa subsp. indica (Rice), this protein is CASP-like protein BLE3 (BLE3).